Reading from the N-terminus, the 529-residue chain is Bifunctional purine biosynthesis protein PurH (529 aa).

An MGS-like domain is found at Thr-2–Thr-149.

Belongs to the PurH family.

It catalyses the reaction (6R)-10-formyltetrahydrofolate + 5-amino-1-(5-phospho-beta-D-ribosyl)imidazole-4-carboxamide = 5-formamido-1-(5-phospho-D-ribosyl)imidazole-4-carboxamide + (6S)-5,6,7,8-tetrahydrofolate. The catalysed reaction is IMP + H2O = 5-formamido-1-(5-phospho-D-ribosyl)imidazole-4-carboxamide. It participates in purine metabolism; IMP biosynthesis via de novo pathway; 5-formamido-1-(5-phospho-D-ribosyl)imidazole-4-carboxamide from 5-amino-1-(5-phospho-D-ribosyl)imidazole-4-carboxamide (10-formyl THF route): step 1/1. The protein operates within purine metabolism; IMP biosynthesis via de novo pathway; IMP from 5-formamido-1-(5-phospho-D-ribosyl)imidazole-4-carboxamide: step 1/1. In Dinoroseobacter shibae (strain DSM 16493 / NCIMB 14021 / DFL 12), this protein is Bifunctional purine biosynthesis protein PurH.